The primary structure comprises 368 residues: 3-dehydroquinate synthase (368 aa).

Residues 71-76, 105-109, 129-130, K142, K151, and 169-172 contribute to the NAD(+) site; these read DGESFK, GVIGD, TT, and TLRT. Positions 184, 247, and 264 each coordinate Zn(2+).

This sequence belongs to the sugar phosphate cyclases superfamily. Dehydroquinate synthase family. It depends on NAD(+) as a cofactor. The cofactor is Co(2+). Zn(2+) is required as a cofactor.

The protein localises to the cytoplasm. It catalyses the reaction 7-phospho-2-dehydro-3-deoxy-D-arabino-heptonate = 3-dehydroquinate + phosphate. It participates in metabolic intermediate biosynthesis; chorismate biosynthesis; chorismate from D-erythrose 4-phosphate and phosphoenolpyruvate: step 2/7. In terms of biological role, catalyzes the conversion of 3-deoxy-D-arabino-heptulosonate 7-phosphate (DAHP) to dehydroquinate (DHQ). The protein is 3-dehydroquinate synthase of Ralstonia nicotianae (strain ATCC BAA-1114 / GMI1000) (Ralstonia solanacearum).